Here is a 559-residue protein sequence, read N- to C-terminus: Potassium-transporting ATPase potassium-binding subunit (559 aa).

A run of 13 helical transmembrane segments spans residues 5–25 (GFLLIASFLLILLVLAKPLGS), 27–47 (LARLIAAVPLPGVAGVERILW), 63–83 (LLALLTLNLLGLGILFCLLFW), 132–152 (GLTVQNFLSAATGIAVVFALI), 170–190 (LVRITLWILFPVALIIALFFI), 253–273 (LAQMLAIFLIPAALCFAFGEA), 283–303 (LLWAMSFIFVVCVAVVMWAEV), 327–347 (FGVLASSLFAVVTTAASCGAV), 356–376 (ALGGMVPMWLMQIGEVVFGGV), 379–399 (GLYGMLLFVLLAVFIAGLMIG), 416–436 (MTALAILVTPMLVLLGSALAM), 484–504 (LLAFCMFVGRFGVIIPVMAIA), and 524–544 (GALFIGLLIGTVLLVGALTFI).

Belongs to the KdpA family. The system is composed of three essential subunits: KdpA, KdpB and KdpC.

The protein resides in the cell inner membrane. Functionally, part of the high-affinity ATP-driven potassium transport (or Kdp) system, which catalyzes the hydrolysis of ATP coupled with the electrogenic transport of potassium into the cytoplasm. This subunit binds the periplasmic potassium ions and delivers the ions to the membrane domain of KdpB through an intramembrane tunnel. The sequence is that of Potassium-transporting ATPase potassium-binding subunit from Salmonella choleraesuis (strain SC-B67).